Consider the following 1184-residue polypeptide: uncharacterized protein (1184 aa).

2 disordered regions span residues 115–152 (ETSS…AHVS) and 397–426 (TYKP…VPER). 2 stretches are compositionally biased toward polar residues: residues 137–152 (HVMN…AHVS) and 397–421 (TYKP…TSHN). Ser-686 is subject to Phosphoserine. Composition is skewed to basic and acidic residues over residues 705-767 (LSER…ESAH), 783-792 (FEHETEPSHY), 849-863 (SHAH…RDLG), and 891-902 (YLHDEKTRDTLT). Disordered stretches follow at residues 705-870 (LSER…FGDV) and 890-1017 (DYLH…SSPK). Position 905 is a phosphoserine (Ser-905). Basic and acidic residues predominate over residues 920–932 (EDHPHASEAERAH). The segment covering 941–950 (SSESSPESQS) has biased composition (low complexity). The span at 999–1011 (PRERLDDNAKEIL) shows a compositional bias: basic and acidic residues. At Ser-1018 the chain carries Phosphoserine. Disordered stretches follow at residues 1029 to 1107 (NRKD…IGTQ) and 1135 to 1154 (DVDN…KSRP). Positions 1032–1045 (DKAAVKRMLEEDSS) are enriched in basic and acidic residues. Residues 1073–1107 (PAVNNSTKPVAVTSKNGHSRNGSHAAHSNNVIGTQ) show a composition bias toward polar residues. Low complexity predominate over residues 1138–1150 (NVVSGHSNVNGVS).

The protein resides in the cytoplasm. This is an uncharacterized protein from Schizosaccharomyces pombe (strain 972 / ATCC 24843) (Fission yeast).